Reading from the N-terminus, the 507-residue chain is Protein O-glucosyltransferase 3 (507 aa).

The signal sequence occupies residues 1 to 20 (MRRLPRALLLQLRLALLVAA). One copy of the Filamin repeat lies at 24–134 (EVLVSAPRSL…VAQSPYILKG (111 aa)). N-linked (GlcNAc...) asparagine glycosylation is found at asparagine 61 and asparagine 306. The short motif at 504 to 507 (REEL) is the Prevents secretion from ER element.

Belongs to the KDELC family.

The protein localises to the endoplasmic reticulum lumen. It catalyses the reaction L-seryl-[EGF-like domain protein] + UDP-alpha-D-glucose = 3-O-(beta-D-glucosyl)-L-seryl-[EGF-like domain protein] + UDP + H(+). It carries out the reaction L-seryl-[EGF-like domain protein] + UDP-alpha-D-xylose = 3-O-(beta-D-xylosyl)-L-seryl-[EGF-like domain protein] + UDP + H(+). The protein operates within protein modification; protein glycosylation. In terms of biological role, protein glucosyltransferase that catalyzes the transfer of glucose from UDP-glucose to a serine residue within the consensus sequence peptide C-X-N-T-X-G-S-F-X-C. Can also catalyze the transfer of xylose from UDP-xylose but less efficiently. Specifically targets extracellular EGF repeats of proteins such as NOTCH1, NOTCH3, FBN1, FBN2 and LTBP1. May regulate the transport of NOTCH1 and NOTCH3 to the plasma membrane and thereby the Notch signaling pathway. This Homo sapiens (Human) protein is Protein O-glucosyltransferase 3.